The chain runs to 504 residues: Pre-mRNA-processing factor 19 (504 aa).

An N-acetylserine modification is found at S2. The region spanning 2 to 73 (SLICSISNEV…KPPSATSIPA (72 aa)) is the U-box domain. Positions 68–223 (ATSIPAILKA…VGLHSASIPG (156 aa)) are may mediate interaction with PSMC5. K122, K179, K244, and K261 each carry N6-acetyllysine. One copy of the WD 1 repeat lies at 219-259 (ASIPGILALDLCPSDTNKILTGGADKNVVVFDKSTEQILAT). WD repeat units follow at residues 262 to 301 (GHTK…CVQV), 304 to 345 (AHES…TKVT), 348 to 387 (TSGC…NVAN), 390 to 429 (GHSG…NFKT), 433 to 472 (DNNF…LHFT), and 473 to 503 (EHSG…KFYS).

It belongs to the WD repeat PRP19 family. Homotetramer. Component of activated, catalytic and post-catalytic spliceosomes. Component of the Prp19 complex/PRP19C/Nineteen complex/NTC and related complexes described as PRP19-CDC5L splicing complex and PSO4 complex. A homotetramer of PRPF19, CDC5L, PLRG1 and BCAS2 constitute the core of those complexes. The interaction with CDC5L, PLRG1 and BCAS2 is direct within this core complex. At least three less stably associated proteins CTNNBL1, CWC15 and HSPA8 are found in the Prp19 complex. The Prp19 complex associates with the spliceosome during its assembly and remodeling recruiting additional proteins. Component of the XAB2 complex, a multimeric protein complex composed of XAB2, PRPF19, AQR, ZNF830, ISY1, and PPIE. Interacts with CWC22 and EIF4A3 in an RNA-independent manner. Interacts with RPA1 and RPA2; the PRP19-CDC5L complex is recruited to the sites of DNA repair where it interacts with the replication protein A complex (RPA). Interacts with SETMAR; required for SETMAR recruitment to site of DNA damage. Interacts with U2AF2; the interaction is direct and recruits the Prp19 complex to RNA polymerase II C-terminal domain (CTD) and the pre-mRNA. Interacts with PRPF3. Interacts with APEX1, DNTT and PSMB4. Interacts with KNSTRN. Interacts with PSMC5. Isoform 2 (via N-terminus) interacts with PPIA. Isoform 2 does not interact with CDC5L. Interacts with KHDC4. Interacts with USB1. Interacts with DDX41. As to expression, expressed in white and brown adipose tissues, brain and to a lower extent in liver, kidney, muscle, lung and spleen (at protein level).

It is found in the nucleus. It localises to the nucleoplasm. The protein localises to the cytoplasm. The protein resides in the cytoskeleton. Its subcellular location is the spindle. It is found in the lipid droplet. It carries out the reaction S-ubiquitinyl-[E2 ubiquitin-conjugating enzyme]-L-cysteine + [acceptor protein]-L-lysine = [E2 ubiquitin-conjugating enzyme]-L-cysteine + N(6)-ubiquitinyl-[acceptor protein]-L-lysine.. Its pathway is protein modification; protein ubiquitination. Ubiquitin-protein ligase which is a core component of several complexes mainly involved in pre-mRNA splicing and DNA repair. Required for pre-mRNA splicing as component of the spliceosome. Core component of the PRP19C/Prp19 complex/NTC/Nineteen complex which is part of the spliceosome and participates in its assembly, its remodeling and is required for its activity. During assembly of the spliceosome, mediates 'Lys-63'-linked polyubiquitination of the U4 spliceosomal protein PRPF3. Ubiquitination of PRPF3 allows its recognition by the U5 component PRPF8 and stabilizes the U4/U5/U6 tri-snRNP spliceosomal complex. Recruited to RNA polymerase II C-terminal domain (CTD) and the pre-mRNA, it may also couple the transcriptional and spliceosomal machineries. The XAB2 complex, which contains PRPF19, is also involved in pre-mRNA splicing, transcription and transcription-coupled repair. Beside its role in pre-mRNA splicing PRPF19, as part of the PRP19-CDC5L complex, plays a role in the DNA damage response/DDR. It is recruited to the sites of DNA damage by the RPA complex where PRPF19 directly ubiquitinates RPA1 and RPA2. 'Lys-63'-linked polyubiquitination of the RPA complex allows the recruitment of the ATR-ATRIP complex and the activation of ATR, a master regulator of the DNA damage response. May also play a role in DNA double-strand break (DSB) repair by recruiting the repair factor SETMAR to altered DNA. As part of the PSO4 complex may also be involved in the DNA interstrand cross-links/ICLs repair process. In addition, may also mediate 'Lys-48'-linked polyubiquitination of substrates and play a role in proteasomal degradation. May play a role in the biogenesis of lipid droplets. May play a role in neural differentiation possibly through its function as part of the spliceosome. Functionally, forced expression leads to suppression of neuronal differentiation, and on the contrary to stimulation of astroglial cell differentiation in retinoic acid-primed P19 cells. The sequence is that of Pre-mRNA-processing factor 19 from Mus musculus (Mouse).